Reading from the N-terminus, the 172-residue chain is Putative methyltransferase Mtx subunit A (172 aa).

The protein belongs to the MtrA family. May be part of a complex composed of 3 subunits; MtxA, MtxH and MtxX.

The polypeptide is Putative methyltransferase Mtx subunit A (mtxA) (Methanosarcina mazei (strain ATCC BAA-159 / DSM 3647 / Goe1 / Go1 / JCM 11833 / OCM 88) (Methanosarcina frisia)).